The chain runs to 74 residues: Large ribosomal subunit protein bL27c (74 aa).

The protein belongs to the bacterial ribosomal protein bL27 family.

It localises to the plastid. Its subcellular location is the chloroplast. This is Large ribosomal subunit protein bL27c (rpl27) from Calyptrosphaera sphaeroidea.